A 200-amino-acid chain; its full sequence is Putative NAD(P)H nitroreductase Spy0809 (200 aa).

FMN serves as cofactor.

This is Putative NAD(P)H nitroreductase Spy0809 from Streptococcus pyogenes serotype M6 (strain ATCC BAA-946 / MGAS10394).